A 787-amino-acid chain; its full sequence is Pyridoxal-dependent decarboxylase domain-containing protein 1 (787 aa).

The span at 29-41 (EDSQRRTEEENGK) shows a compositional bias: basic and acidic residues. The interval 29–52 (EDSQRRTEEENGKKLLSGDIPGPL) is disordered. Serine 653 is modified (phosphoserine). The tract at residues 683 to 787 (QGSGVTPPQT…PQVEEPESLR (105 aa)) is disordered. A compositionally biased stretch (polar residues) spans 685–697 (SGVTPPQTPTGTR). Threonine 688 and threonine 692 each carry phosphothreonine. 3 positions are modified to phosphoserine: serine 711, serine 719, and serine 723. The span at 735-745 (QSSGGQEASEA) shows a compositional bias: polar residues. Phosphoserine is present on residues serine 747 and serine 785. The span at 774–787 (QDDRPQVEEPESLR) shows a compositional bias: basic and acidic residues.

The protein belongs to the group II decarboxylase family. Requires pyridoxal 5'-phosphate as cofactor.

The sequence is that of Pyridoxal-dependent decarboxylase domain-containing protein 1 (PDXDC1) from Bos taurus (Bovine).